The primary structure comprises 715 residues: Polyribonucleotide nucleotidyltransferase (715 aa).

Residues Asp498 and Asp504 each contribute to the Mg(2+) site. In terms of domain architecture, KH spans 565-625; sequence PKVCMMQIKP…ETVKKTVAFI (61 aa). The region spanning 635-709 is the S1 motif domain; the sequence is GTCYQASILR…RIDFLLLPKK (75 aa).

This sequence belongs to the polyribonucleotide nucleotidyltransferase family. It depends on Mg(2+) as a cofactor.

The protein resides in the cytoplasm. The catalysed reaction is RNA(n+1) + phosphate = RNA(n) + a ribonucleoside 5'-diphosphate. Its function is as follows. Involved in mRNA degradation. Catalyzes the phosphorolysis of single-stranded polyribonucleotides processively in the 3'- to 5'-direction. The sequence is that of Polyribonucleotide nucleotidyltransferase from Aster yellows witches'-broom phytoplasma (strain AYWB).